Consider the following 791-residue polypeptide: DNA repair and recombination protein RAD54-like (791 aa).

A compositionally biased stretch (polar residues) spans 1–20; the sequence is MRRSLAPSQRIGQSTASRNA. Residues 1–53 are disordered; it reads MRRSLAPSQRIGQSTASRNAFTPPLLQKKNKRACQKDLRLDTDADEDKERKRF. Residues 2–9 are required for chromatin remodeling, strand pairing activities and coupling of ATPase activity; the sequence is RRSLAPSQ. Thr-22 is subject to Phosphothreonine. A compositionally biased stretch (basic and acidic residues) spans 34–53; the sequence is CQKDLRLDTDADEDKERKRF. The region spanning 175–349 is the Helicase ATP-binding domain; it reads EGKKGDFNGC…FSLVNFVNPE (175 aa). ATP is bound at residue 188-195; it reads DEMGLGKT. The DEGH box signature appears at 300–303; that stretch reads DEGH. The 158-residue stretch at 506–663 folds into the Helicase C-terminal domain; it reads LLDFMLAAIR…NNESSEKHFT (158 aa). The segment at 747–791 is disordered; it reads KEVVESPESAAAEAESVEEESQPTQRKRPSPPLSDDSADEDFIGF. The segment covering 782–791 has biased composition (acidic residues); sequence DSADEDFIGF.

The protein belongs to the SNF2/RAD54 helicase family. In terms of assembly, interacts (via N-terminus) with spn-A/Rad51.

The protein resides in the nucleus. Its function is as follows. Involved in mitotic DNA repair and meiotic recombination. Functions in the recombinational DNA repair pathway. Essential for interhomolog gene conversion (GC), but may have a less important role in intersister GC than spn-A/Rad51. In the presence of DNA, spn-A/Rad51 enhances the ATPase activity of okr/Rad54. This chain is DNA repair and recombination protein RAD54-like, found in Drosophila ananassae (Fruit fly).